The sequence spans 437 residues: Kynureninase (437 aa).

Residues Leu-99, Thr-100, 127-130, Ser-183, Asp-212, His-215, and Tyr-237 each bind pyridoxal 5'-phosphate; that span reads FPSD. Position 238 is an N6-(pyridoxal phosphate)lysine (Lys-238). Trp-267 and Asn-295 together coordinate pyridoxal 5'-phosphate.

It belongs to the kynureninase family. Homodimer. Requires pyridoxal 5'-phosphate as cofactor.

It localises to the cytoplasm. It catalyses the reaction L-kynurenine + H2O = anthranilate + L-alanine + H(+). It carries out the reaction 3-hydroxy-L-kynurenine + H2O = 3-hydroxyanthranilate + L-alanine + H(+). It participates in amino-acid degradation; L-kynurenine degradation; L-alanine and anthranilate from L-kynurenine: step 1/1. The protein operates within cofactor biosynthesis; NAD(+) biosynthesis; quinolinate from L-kynurenine: step 2/3. Catalyzes the cleavage of L-kynurenine (L-Kyn) and L-3-hydroxykynurenine (L-3OHKyn) into anthranilic acid (AA) and 3-hydroxyanthranilic acid (3-OHAA), respectively. In Yarrowia lipolytica (strain CLIB 122 / E 150) (Yeast), this protein is Kynureninase.